We begin with the raw amino-acid sequence, 167 residues long: Bacterial non-heme ferritin-like protein (167 aa).

Residues 1–145 (MATAGMLLKL…TILDEVRSAK (145 aa)) form the Ferritin-like diiron domain.

The protein belongs to the ferritin family. Prokaryotic subfamily.

The protein localises to the cytoplasm. The sequence is that of Bacterial non-heme ferritin-like protein (ftnB) from Escherichia coli O157:H7.